The following is a 247-amino-acid chain: Probable cyclic nucleotide phosphodiesterase XBJ1_0953 (247 aa).

Positions 8, 10, 52, 82, 154, 192, and 194 each coordinate Fe cation. AMP-binding positions include His10, Asp52, and 82-83 (NH). His194 is an AMP binding site.

This sequence belongs to the cyclic nucleotide phosphodiesterase class-III family. It depends on Fe(2+) as a cofactor.

This chain is Probable cyclic nucleotide phosphodiesterase XBJ1_0953, found in Xenorhabdus bovienii (strain SS-2004) (Xenorhabdus nematophila subsp. bovienii).